A 142-amino-acid chain; its full sequence is Large ribosomal subunit protein uL11 (142 aa).

The protein belongs to the universal ribosomal protein uL11 family. Part of the ribosomal stalk of the 50S ribosomal subunit. Interacts with L10 and the large rRNA to form the base of the stalk. L10 forms an elongated spine to which L12 dimers bind in a sequential fashion forming a multimeric L10(L12)X complex. In terms of processing, one or more lysine residues are methylated.

In terms of biological role, forms part of the ribosomal stalk which helps the ribosome interact with GTP-bound translation factors. This chain is Large ribosomal subunit protein uL11, found in Leptospira borgpetersenii serovar Hardjo-bovis (strain JB197).